A 311-amino-acid polypeptide reads, in one-letter code: MQENQKNTKKEIYNLNKLQKRLRRNVGEAIADFNMIEEGDRIMVCLSGGKDSYTMLEILRNLQQSAPINFSLVAVNLDQKQPGFPEHVLPEYLETLGVEYKIVEENTYGIVKEKIPEGKTTCSLCSRLRRGILYRTATELGATKIALGHHRDDILQTLFLNMFYGGKMKGMPPKLMSDDGKHIVIRPLAYCREKDIQRFADAKAFPIIPCNLCGSQPNLQRQVIADMLRDWDKRYPGRIETMFSAMQNVVPSHLCDTNLFDFKGITHGSEVVNGGDLAFDREEIPLQPSGWQPEEDENQLDELRLNVVEVK.

Residues 47–52 (SGGKDS) carry the PP-loop motif motif. [4Fe-4S] cluster-binding residues include Cys-122, Cys-125, and Cys-213.

Belongs to the TtcA family. As to quaternary structure, homodimer. The cofactor is Mg(2+). [4Fe-4S] cluster serves as cofactor.

It localises to the cytoplasm. The enzyme catalyses cytidine(32) in tRNA + S-sulfanyl-L-cysteinyl-[cysteine desulfurase] + AH2 + ATP = 2-thiocytidine(32) in tRNA + L-cysteinyl-[cysteine desulfurase] + A + AMP + diphosphate + H(+). It participates in tRNA modification. Functionally, catalyzes the ATP-dependent 2-thiolation of cytidine in position 32 of tRNA, to form 2-thiocytidine (s(2)C32). The sulfur atoms are provided by the cysteine/cysteine desulfurase (IscS) system. In Escherichia coli O1:K1 / APEC, this protein is tRNA-cytidine(32) 2-sulfurtransferase.